A 185-amino-acid polypeptide reads, in one-letter code: Putative 3-methyladenine DNA glycosylase (185 aa).

It belongs to the DNA glycosylase MPG family.

In Rhizobium meliloti (strain 1021) (Ensifer meliloti), this protein is Putative 3-methyladenine DNA glycosylase.